Reading from the N-terminus, the 351-residue chain is Protein-glutamate methylesterase/protein-glutamine glutaminase 2 (351 aa).

Positions 4–121 (KVLVVDDSAL…PQDFNEYQDL (118 aa)) constitute a Response regulatory domain. A 4-aspartylphosphate modification is found at Asp-55. A CheB-type methylesterase domain is found at 156-348 (RVINTQLVAI…DKMLNYLASL (193 aa)). Residues Ser-168, His-194, and Asp-290 contribute to the active site.

It belongs to the CheB family. Phosphorylated by CheA. Phosphorylation of the N-terminal regulatory domain activates the methylesterase activity.

It is found in the cytoplasm. It carries out the reaction [protein]-L-glutamate 5-O-methyl ester + H2O = L-glutamyl-[protein] + methanol + H(+). It catalyses the reaction L-glutaminyl-[protein] + H2O = L-glutamyl-[protein] + NH4(+). In terms of biological role, involved in chemotaxis. Part of a chemotaxis signal transduction system that modulates chemotaxis in response to various stimuli. Catalyzes the demethylation of specific methylglutamate residues introduced into the chemoreceptors (methyl-accepting chemotaxis proteins or MCP) by CheR. Also mediates the irreversible deamidation of specific glutamine residues to glutamic acid. The sequence is that of Protein-glutamate methylesterase/protein-glutamine glutaminase 2 from Shewanella sp. (strain MR-7).